The chain runs to 347 residues: Mitochondrial genome maintenance exonuclease 1 (347 aa).

Active-site residues include Asp246, Asp259, and Lys261.

This sequence belongs to the MGME1 family.

The protein resides in the mitochondrion. Its function is as follows. Single-stranded DNA (ssDNA) metal-dependent exonuclease involved in mitochondrial genome maintenance. Has preference for 5'-3' exonuclease activity. Necessary for maintenance of proper 7S DNA levels. Probably involved in mitochondrial DNA (mtDNA) repair. Specifically binds 5-hydroxymethylcytosine (5hmC)-containing DNA in stem cells. The sequence is that of Mitochondrial genome maintenance exonuclease 1 (mgme1) from Xenopus tropicalis (Western clawed frog).